A 371-amino-acid polypeptide reads, in one-letter code: Glycosyltransferase 8 domain-containing protein 1 (371 aa).

At 1 to 7 (MSFRKVN) the chain is on the cytoplasmic side. Residues 8–28 (IIILVLAVALFLLVLHHNFLS) form a helical; Signal-anchor for type II membrane protein membrane-spanning segment. The Lumenal portion of the chain corresponds to 29–371 (LSSLLRNEVT…RRYTEISNIK (343 aa)). Residues Asn249 and Asn257 are each glycosylated (N-linked (GlcNAc...) asparagine).

The protein belongs to the glycosyltransferase 8 family.

Its subcellular location is the membrane. In Homo sapiens (Human), this protein is Glycosyltransferase 8 domain-containing protein 1 (GLT8D1).